Consider the following 79-residue polypeptide: ATP synthase subunit c (79 aa).

Transmembrane regions (helical) follow at residues 7-27 and 56-76; these read VSGMAALGAGIAALACIGAGI and IGSAFSEATAIYGLIIALFLI.

This sequence belongs to the ATPase C chain family. In terms of assembly, F-type ATPases have 2 components, F(1) - the catalytic core - and F(0) - the membrane proton channel. F(1) has five subunits: alpha(3), beta(3), gamma(1), delta(1), epsilon(1). F(0) has three main subunits: a(1), b(2) and c(10-14). The alpha and beta chains form an alternating ring which encloses part of the gamma chain. F(1) is attached to F(0) by a central stalk formed by the gamma and epsilon chains, while a peripheral stalk is formed by the delta and b chains.

Its subcellular location is the cell membrane. F(1)F(0) ATP synthase produces ATP from ADP in the presence of a proton or sodium gradient. F-type ATPases consist of two structural domains, F(1) containing the extramembraneous catalytic core and F(0) containing the membrane proton channel, linked together by a central stalk and a peripheral stalk. During catalysis, ATP synthesis in the catalytic domain of F(1) is coupled via a rotary mechanism of the central stalk subunits to proton translocation. In terms of biological role, key component of the F(0) channel; it plays a direct role in translocation across the membrane. A homomeric c-ring of between 10-14 subunits forms the central stalk rotor element with the F(1) delta and epsilon subunits. The sequence is that of ATP synthase subunit c from Clostridium botulinum (strain Hall / ATCC 3502 / NCTC 13319 / Type A).